The sequence spans 132 residues: ATP synthase epsilon chain (132 aa).

This sequence belongs to the ATPase epsilon chain family. In terms of assembly, F-type ATPases have 2 components, CF(1) - the catalytic core - and CF(0) - the membrane proton channel. CF(1) has five subunits: alpha(3), beta(3), gamma(1), delta(1), epsilon(1). CF(0) has three main subunits: a, b and c.

It localises to the cell membrane. Produces ATP from ADP in the presence of a proton gradient across the membrane. The sequence is that of ATP synthase epsilon chain (atpC) from Geobacillus stearothermophilus (Bacillus stearothermophilus).